The primary structure comprises 229 residues: Uracil-DNA glycosylase (229 aa).

D64 (proton acceptor) is an active-site residue.

This sequence belongs to the uracil-DNA glycosylase (UDG) superfamily. UNG family.

It localises to the cytoplasm. It catalyses the reaction Hydrolyzes single-stranded DNA or mismatched double-stranded DNA and polynucleotides, releasing free uracil.. Functionally, excises uracil residues from the DNA which can arise as a result of misincorporation of dUMP residues by DNA polymerase or due to deamination of cytosine. The sequence is that of Uracil-DNA glycosylase from Escherichia coli (strain 55989 / EAEC).